Reading from the N-terminus, the 1098-residue chain is Bifunctional helicase and thymine dioxygenase JBP2 (1098 aa).

The interval 1-540 (MLNGLTRVST…PPLFVPTRLA (540 aa)) is thymine dioxygenase. The Fe cation site is built by histidine 415, aspartate 417, and histidine 465. Arginine 479 lines the 2-oxoglutarate pocket. Residues 541 to 1098 (SHLAPVQLAA…RYQESVRESE (558 aa)) are DNA Helicase. One can recognise a Helicase ATP-binding domain in the interval 555–730 (VERTEKQSGC…YRLVGWVNKG (176 aa)). 568 to 575 (MTMGLGKT) provides a ligand contact to ATP. Residues 681-684 (DEGH) carry the DEAH box motif. Residues 897–1057 (VLVDIVLRVQ…ALPDELEDCA (161 aa)) enclose the Helicase C-terminal domain.

In the C-terminal section; belongs to the SNF2/RAD54 helicase family. The protein in the N-terminal section; belongs to the TET family. JBP2 subfamily. It depends on Fe(2+) as a cofactor.

The protein resides in the nucleus. The catalysed reaction is ATP + H2O = ADP + phosphate + H(+). It catalyses the reaction thymine + 2-oxoglutarate + O2 = 5-hydroxymethyluracil + succinate + CO2. Dioxygenase that catalyzes the first step of DNA base J (beta-d-glucosyl-HOMedU) biosynthesis by converting thymine to 5-hydroxymethyluracil (HOMedU). DNA base J is a hypermodified thymidine residue found in the genome of kinetoplastid parasites, which is localized primarily to repetitive DNA, namely the telomeres, and is implicated in the regulation of antigenic variation. Probably also acts as a DNA helicase. Recognizes and binds specific regions of the genome, hydrolyzes ATP and allows the DNA base J de novo synthesis. Involved in initial synthesis of DNA base J, JBP1 being able to act via the basal level of DNA base J and propagate further synthesis. In contrast to JBP1, it does not specifically bind DNA base J, however it binds chromatin. This is Bifunctional helicase and thymine dioxygenase JBP2 (JBP2) from Leishmania tarentolae (Sauroleishmania tarentolae).